Reading from the N-terminus, the 388-residue chain is MMISDLPHDLESEILSRVPAKSLAKWKTTCKRWYALFRDPSFVKKNFDKAGGREMIVLMNSRVYSNSVNLQGINNRFDPSMEVTGKLIKLNDSKGVDISAIFHCDGLILCTTTESTGLVVWNPCTGEIRCIKPRIFYRCNDRYALGYGNSKSSCHSYKILRSCCYYVDQNLSLMAAEFEIYDFSTDSWRDLGDITRDMIVYSSGVSLKGNTYWVSGSKEKGFFMRYFDFSKEVFGRLPLPYQSFNANHTAALSAVGNEKIAVLQQKILAMSDEMRIWVTNKIDEAKDLSWSNFLLTVDYGKFNLPCLVNVTSFLLDEENKVAVCSDVDTKDGLRSRIYIVGKDFYKEVFKDTRGSDNNWPLLLCYVPSLVSIQENIPNKAEENEIKGG.

The 50-residue stretch at 1 to 50 (MMISDLPHDLESEILSRVPAKSLAKWKTTCKRWYALFRDPSFVKKNFDKA) folds into the F-box domain. Kelch repeat units lie at residues 163–208 (CCYY…VSLK) and 336–383 (RIYI…AEEN).

This is F-box/kelch-repeat protein At3g17530 from Arabidopsis thaliana (Mouse-ear cress).